Consider the following 795-residue polypeptide: Phenylalanine--tRNA ligase beta subunit (795 aa).

In terms of domain architecture, tRNA-binding spans 39 to 148 (AGSFHGVVVG…ADAPIGTDIR (110 aa)). Residues 401-476 (PKRATITLRR…RVYGYNNIPD (76 aa)) enclose the B5 domain. Mg(2+)-binding residues include Asp454, Asp460, Glu463, and Glu464. The region spanning 701 to 794 (SRFPANRRDI…LKERFQASLR (94 aa)) is the FDX-ACB domain.

The protein belongs to the phenylalanyl-tRNA synthetase beta subunit family. Type 1 subfamily. As to quaternary structure, tetramer of two alpha and two beta subunits. The cofactor is Mg(2+).

The protein localises to the cytoplasm. It catalyses the reaction tRNA(Phe) + L-phenylalanine + ATP = L-phenylalanyl-tRNA(Phe) + AMP + diphosphate + H(+). The chain is Phenylalanine--tRNA ligase beta subunit from Shigella sonnei (strain Ss046).